A 407-amino-acid chain; its full sequence is Probable tRNA sulfurtransferase (407 aa).

A THUMP domain is found at 61–165 (NEITYRLSKI…LDAIYMYEEV (105 aa)). ATP is bound by residues 183-184 (ML), 208-209 (HF), arginine 265, glycine 287, and glutamine 296.

Belongs to the ThiI family.

The protein localises to the cytoplasm. The catalysed reaction is [ThiI sulfur-carrier protein]-S-sulfanyl-L-cysteine + a uridine in tRNA + 2 reduced [2Fe-2S]-[ferredoxin] + ATP + H(+) = [ThiI sulfur-carrier protein]-L-cysteine + a 4-thiouridine in tRNA + 2 oxidized [2Fe-2S]-[ferredoxin] + AMP + diphosphate. It catalyses the reaction [ThiS sulfur-carrier protein]-C-terminal Gly-Gly-AMP + S-sulfanyl-L-cysteinyl-[cysteine desulfurase] + AH2 = [ThiS sulfur-carrier protein]-C-terminal-Gly-aminoethanethioate + L-cysteinyl-[cysteine desulfurase] + A + AMP + 2 H(+). It functions in the pathway cofactor biosynthesis; thiamine diphosphate biosynthesis. Catalyzes the ATP-dependent transfer of a sulfur to tRNA to produce 4-thiouridine in position 8 of tRNAs, which functions as a near-UV photosensor. Also catalyzes the transfer of sulfur to the sulfur carrier protein ThiS, forming ThiS-thiocarboxylate. This is a step in the synthesis of thiazole, in the thiamine biosynthesis pathway. The sulfur is donated as persulfide by IscS. This chain is Probable tRNA sulfurtransferase, found in Staphylococcus aureus (strain Mu3 / ATCC 700698).